The sequence spans 176 residues: 3-hydroxydecanoyl-[acyl-carrier-protein] dehydratase (176 aa).

H75 is a catalytic residue.

This sequence belongs to the thioester dehydratase family. FabA subfamily. Homodimer.

The protein localises to the cytoplasm. The enzyme catalyses a (3R)-hydroxyacyl-[ACP] = a (2E)-enoyl-[ACP] + H2O. The catalysed reaction is (3R)-hydroxydecanoyl-[ACP] = (2E)-decenoyl-[ACP] + H2O. It carries out the reaction (2E)-decenoyl-[ACP] = (3Z)-decenoyl-[ACP]. Its pathway is lipid metabolism; fatty acid biosynthesis. Necessary for the introduction of cis unsaturation into fatty acids. Catalyzes the dehydration of (3R)-3-hydroxydecanoyl-ACP to E-(2)-decenoyl-ACP and then its isomerization to Z-(3)-decenoyl-ACP. Can catalyze the dehydratase reaction for beta-hydroxyacyl-ACPs with saturated chain lengths up to 16:0, being most active on intermediate chain length. The sequence is that of 3-hydroxydecanoyl-[acyl-carrier-protein] dehydratase from Glaesserella parasuis serovar 5 (strain SH0165) (Haemophilus parasuis).